We begin with the raw amino-acid sequence, 188 residues long: Protein crossbronx-like (188 aa).

In terms of domain architecture, UBC core spans 15 to 174 (KQGYHILAEY…ANQVVKLHCG (160 aa)).

The protein belongs to the ubiquitin-conjugating enzyme family. FTS subfamily.

The protein is Protein crossbronx-like of Drosophila simulans (Fruit fly).